The chain runs to 139 residues: MFRTMLKSKIHRATVTQADLHYVGSCTIDADLMDAADILEGEQIDIVDIDNGNRLTTYAITGERGSGVIGINGAAARLISPGDLVIIIGYGIFDNAELGDYHPRVIFVDENNKQVELGEDPAHAPAGSGLKDPRHPEGE.

Ser25 (schiff-base intermediate with substrate; via pyruvic acid) is an active-site residue. Residue Ser25 is modified to Pyruvic acid (Ser). Residue Thr57 participates in substrate binding. Residue Tyr58 is the Proton donor of the active site. 73 to 75 (GAA) is a substrate binding site. Positions 116–139 (ELGEDPAHAPAGSGLKDPRHPEGE) are disordered.

This sequence belongs to the PanD family. Heterooctamer of four alpha and four beta subunits. Pyruvate is required as a cofactor. Is synthesized initially as an inactive proenzyme, which is activated by self-cleavage at a specific serine bond to produce a beta-subunit with a hydroxyl group at its C-terminus and an alpha-subunit with a pyruvoyl group at its N-terminus.

It localises to the cytoplasm. The enzyme catalyses L-aspartate + H(+) = beta-alanine + CO2. Its pathway is cofactor biosynthesis; (R)-pantothenate biosynthesis; beta-alanine from L-aspartate: step 1/1. Its function is as follows. Catalyzes the pyruvoyl-dependent decarboxylation of aspartate to produce beta-alanine. The chain is Aspartate 1-decarboxylase from Corynebacterium urealyticum (strain ATCC 43042 / DSM 7109).